The primary structure comprises 393 residues: Sedoheptulose-1,7-bisphosphatase, chloroplastic (393 aa).

Cys-115 and Cys-120 are oxidised to a cystine. Positions 126, 155, 176, 178, and 179 each coordinate Mg(2+). Substrate is bound by residues 179–182, Tyr-290, and Lys-320; that span reads DGSS. Glu-326 provides a ligand contact to Mg(2+).

This sequence belongs to the FBPase class 1 family. Homodimer. The cofactor is Mg(2+).

It is found in the plastid. It localises to the chloroplast. The catalysed reaction is D-sedoheptulose 1,7-bisphosphate + H2O = D-sedoheptulose 7-phosphate + phosphate. It functions in the pathway carbohydrate biosynthesis; Calvin cycle. This is Sedoheptulose-1,7-bisphosphatase, chloroplastic from Triticum aestivum (Wheat).